The chain runs to 66 residues: UPF0370 protein YpfN (66 aa).

Residues 4 to 24 (LAKYWWILVLVFLVGVLLNVI) form a helical membrane-spanning segment. Residues 39-66 (KPELPPHRDFNDKWDDEDDWPKKDQSKK) form a disordered region. A compositionally biased stretch (basic and acidic residues) spans 42–51 (LPPHRDFNDK).

The protein belongs to the UPF0370 family.

The protein resides in the cell membrane. This Salmonella arizonae (strain ATCC BAA-731 / CDC346-86 / RSK2980) protein is UPF0370 protein YpfN.